Reading from the N-terminus, the 175-residue chain is Ribosome maturation factor RimM (175 aa).

The region spanning 96 to 175 (DGDYYWKDLI…IIKVDWDPEF (80 aa)) is the PRC barrel domain.

It belongs to the RimM family. As to quaternary structure, binds ribosomal protein uS19.

The protein localises to the cytoplasm. Its function is as follows. An accessory protein needed during the final step in the assembly of 30S ribosomal subunit, possibly for assembly of the head region. Essential for efficient processing of 16S rRNA. May be needed both before and after RbfA during the maturation of 16S rRNA. It has affinity for free ribosomal 30S subunits but not for 70S ribosomes. The chain is Ribosome maturation factor RimM from Baumannia cicadellinicola subsp. Homalodisca coagulata.